Reading from the N-terminus, the 589-residue chain is Aspartate--tRNA ligase (589 aa).

An L-aspartate-binding site is contributed by E175. Residues 199-202 are aspartate; it reads QIFK. R221 is a binding site for L-aspartate. ATP contacts are provided by residues 221 to 223 and Q230; that span reads RDE. H449 provides a ligand contact to L-aspartate. E483 lines the ATP pocket. Position 490 (R490) interacts with L-aspartate. Residue 535 to 538 coordinates ATP; that stretch reads GLDR.

The protein belongs to the class-II aminoacyl-tRNA synthetase family. Type 1 subfamily. Homodimer.

The protein localises to the cytoplasm. The catalysed reaction is tRNA(Asp) + L-aspartate + ATP = L-aspartyl-tRNA(Asp) + AMP + diphosphate. Catalyzes the attachment of L-aspartate to tRNA(Asp) in a two-step reaction: L-aspartate is first activated by ATP to form Asp-AMP and then transferred to the acceptor end of tRNA(Asp). The chain is Aspartate--tRNA ligase from Shouchella clausii (strain KSM-K16) (Alkalihalobacillus clausii).